Reading from the N-terminus, the 64-residue chain is Large ribosomal subunit protein bL35 (64 aa).

It belongs to the bacterial ribosomal protein bL35 family.

In Colwellia psychrerythraea (strain 34H / ATCC BAA-681) (Vibrio psychroerythus), this protein is Large ribosomal subunit protein bL35.